A 268-amino-acid polypeptide reads, in one-letter code: Eukaryotic translation initiation factor 2 subunit beta (268 aa).

Positions 1-12 (MADEINEIREEQ) are enriched in basic and acidic residues. The disordered stretch occupies residues 1–85 (MADEINEIRE…LNNESVDAGE (85 aa)). Position 2 is an N-acetylalanine (alanine 2). Phosphoserine; by CK2 is present on residues serine 42, serine 80, and serine 112. Residues 222-246 (CLGCKSPDTILSKENRLFFLRCEKC) form a C4-type zinc finger.

It belongs to the eIF-2-beta/eIF-5 family. In terms of assembly, eukaryotic translation initiation factor 2 eIF2 is a heterotrimeric complex composed of an alpha, a beta and a gamma subunit. In terms of processing, phosphorylated at Ser-42, Ser-80 and Ser-112 by CK2.

The protein resides in the cytoplasm. The protein localises to the cytosol. Functionally, component of the eIF2 complex that functions in the early steps of protein synthesis by forming a ternary complex with GTP and initiator tRNA. This complex binds to a 40S ribosomal subunit, followed by mRNA binding to form a 43S pre-initiation complex (43S PIC). Junction of the 60S ribosomal subunit to form the 80S initiation complex is preceded by hydrolysis of the GTP bound to eIF2 and release of an eIF2-GDP binary complex. In order for eIF2 to recycle and catalyze another round of initiation, the GDP bound to eIF2 must exchange with GTP by way of a reaction catalyzed by eIF2B. This Arabidopsis thaliana (Mouse-ear cress) protein is Eukaryotic translation initiation factor 2 subunit beta.